We begin with the raw amino-acid sequence, 551 residues long: E3 ubiquitin-protein ligase TRIM8 (551 aa).

The segment at 15-56 (CPICLHVFVEPVQLPCKHNFCRGCIGEAWAKDSGLVRCPECN) adopts an RING-type zinc-finger fold. B box-type zinc fingers lie at residues 92–132 (CVFC…ARGH) and 140–182 (VRAW…VCDV). 2 coiled-coil regions span residues 181 to 249 (DVEI…DLRQ) and 274 to 295 (ERMQ…KTED). A disordered region spans residues 399–457 (QYGAAGTASSEGQSGQPLGPCSSTQHLVALPGGTQPVHSSPVFPPSQYPNGSTTQQPML). Polar residues-rich tracts occupy residues 405 to 424 (TASS…STQH) and 446 to 456 (YPNGSTTQQPM).

Belongs to the TRIM/RBCC family. Homodimer. Interacts with SOCS1 (via) SH2 domain and SOCS box. Interacts with HSP90AB1; prevents nucleus translocation of phosphorylated STAT3 and HSP90AB1. Interacts with MAP3K7/TAK1. Interacts with PIAS3. Interacts with TICAM1. Interacts with TRIM15; this interaction prevents TRIM8 cytoplasmic translocation. In terms of tissue distribution, high expression in heart, liver, and thymus. Expressed in embryonic CNS, kidney, lens and gut.

It catalyses the reaction S-ubiquitinyl-[E2 ubiquitin-conjugating enzyme]-L-cysteine + [acceptor protein]-L-lysine = [E2 ubiquitin-conjugating enzyme]-L-cysteine + N(6)-ubiquitinyl-[acceptor protein]-L-lysine.. The protein operates within protein modification; protein ubiquitination. E3 ubiquitin-protein ligase that participates in multiple biological processes including cell survival, differentiation, apoptosis, and in particular, the innate immune response. Participates in the activation of interferon-gamma signaling by promoting proteasomal degradation of the repressor SOCS1. Plays a positive role in the TNFalpha and IL-1beta signaling pathways. Mechanistically, induces the 'Lys-63'-linked polyubiquitination of MAP3K7/TAK1 component leading to the activation of NF-kappa-B. Also modulates STAT3 activity through negative regulation of PIAS3, either by degradation of PIAS3 through the ubiquitin-proteasome pathway or exclusion of PIAS3 from the nucleus. Negatively regulates TLR3/4-mediated innate immune response by catalyzing 'Lys-6'- and 'Lys-33'-linked polyubiquitination of TICAM1 and thereby disrupting the TICAM1-TBK1 interaction. This is E3 ubiquitin-protein ligase TRIM8 (Trim8) from Mus musculus (Mouse).